The following is a 178-amino-acid chain: TM2 domain-containing protein biscotti (178 aa).

An N-terminal signal peptide occupies residues 1 to 18 (MFPVLLLLLFFFAKETHQ). Topologically, residues 19 to 99 (INVDCNELQM…YHLDTTLLLS (81 aa)) are extracellular. Residues Asn69 and Asn75 are each glycosylated (N-linked (GlcNAc...) asparagine). A TM2 domain is found at 94-137 (TTLLLSVFLGMFGVDRFYLGYPGIGLLKFCTLGGMFLGQLIDIV). A helical transmembrane segment spans residues 100 to 120 (VFLGMFGVDRFYLGYPGIGLL). The Cytoplasmic portion of the chain corresponds to 121–124 (KFCT). A helical transmembrane segment spans residues 125 to 145 (LGGMFLGQLIDIVLIALQVVG). The Extracellular portion of the chain corresponds to 146 to 178 (PADGSAYVIPYYGAGIHIVRSDNTTYRLPRDDW). An N-linked (GlcNAc...) asparagine glycan is attached at Asn168.

This sequence belongs to the TM2 family.

Its subcellular location is the membrane. Its function is as follows. Positive regulator of Notch signaling. Maternal neurogenic factor involved in Notch signaling-dependent neuroectodermal specification during early embryogenesis. Functions cooperatively with amx/TM2D3 and amrt/TM2D2. The sequence is that of TM2 domain-containing protein biscotti from Drosophila melanogaster (Fruit fly).